The following is a 592-amino-acid chain: Ferric-chelate reductase 1 (592 aa).

A helical transmembrane segment spans residues 2–22 (AAPQITLSVLVIALLTCSVTA). The Reelin domain maps to 13–179 (IALLTCSVTA…FTTPKATTQP (167 aa)). N-linked (GlcNAc...) asparagine glycans are attached at residues Asn-85, Asn-308, Asn-321, and Asn-353. The DOMON domain occupies 216 to 331 (EPACVFLSFT…ESYYIFFAEG (116 aa)). Residues 335 to 534 (DGRIFRHSQQ…IGTEVILEIH (200 aa)) form the Cytochrome b561 domain. The helical transmembrane segment at 372–392 (AHGALMFVAWMTTVSIGVLVA) threads the bilayer. The heme b site is built by His-373 and His-414. The next 5 helical transmembrane spans lie at 415–435 (RMLMVATSLLTCVAFVLPFVY), 446–466 (HPYLGCTVMTLAVLQPLLATF), 477–499 (VFNWTHWSVGTAARIIAVAAMFL), 515–535 (YAMMGFVVWHIGTEVILEIHA), and 569–589 (VVLAVYICGNVIFLSIFLSAI). Residues His-446 and His-482 each contribute to the heme b site.

The protein belongs to the FRRS1 family. It depends on heme b as a cofactor. As to expression, expressed in spleen, liver and kidney with low expression in brain. Localizes in adult brain to the choroid plexus of the fourth, third, and lateral ventricles and to ependymal cells that line the ventricles.

Its subcellular location is the membrane. Functionally, ferric-chelate reductases reduce Fe(3+) to Fe(2+) before its transport from the endosome to the cytoplasm. The chain is Ferric-chelate reductase 1 (FRRS1) from Mus musculus (Mouse).